Consider the following 579-residue polypeptide: Nif-specific regulatory protein (579 aa).

The GAF domain occupies 40–187 (DPVAEVPQIF…MVASLLEQAL (148 aa)). Residues 226-454 (IVGSSPAIAE…LENCVNRAAA (229 aa)) form the Sigma-54 factor interaction domain. ATP-binding positions include 254–261 (GESGTGKE) and 317–326 (ADGGTLFLDE). Residues 464 to 536 (EELACRQGAC…PLRTKTAQLS (73 aa)) are inter-domain linker. 2 residues coordinate a divalent metal cation: cysteine 468 and cysteine 473. Positions 502 to 529 (RVSAPPPEPAPAPEPAPEAPPREEVPLR) are disordered. A run of 7 repeats spans residues 505-506 (AP), 507-508 (PP), 509-510 (EP), 511-512 (AP), 513-514 (AP), 515-516 (EP), and 517-518 (AP). Residues 505 to 518 (APPPEPAPAPEPAP) form a 7 X 2 AA tandem repeats of X-P region. Residues 505-520 (APPPEPAPAPEPAPEA) show a composition bias toward pro residues. Residues 537 to 579 (REELLRALESAGWVQAKAARLLGMTPRQIAYALQKFEIELRKI) form a C-terminal DNA-binding domain region. The segment at residues 551–570 (QAKAARLLGMTPRQIAYALQ) is a DNA-binding region (H-T-H motif).

Interacts with sigma-54.

In terms of biological role, required for activation of most nif operons, which are directly involved in nitrogen fixation. The sequence is that of Nif-specific regulatory protein (nifA1) from Rhodobacter capsulatus (strain ATCC BAA-309 / NBRC 16581 / SB1003).